The primary structure comprises 650 residues: MVQITLPDGSQRQFPGPVTVAEVAQSIGTGLAKAALGGRVTEPGGEPRLVDTSYRLEHDAQLAIVTAKDADGLDMIRHSTAHLLAYAVKELFPDAQVTIGPVIDNGFYYDFSYKRPFTPEDLAAIEKKMTELARKDETVTREEWTRDDAVAYFKSIGEDYKAEIIASIPANETLSLYREGNFVDLCRGPHVPSTGKLKVFKLMKVAGAYWRGDSNNEMLQRIYGTAWATKDDQDAYLHMLEEAERRDHRKIGRDLDLFHFQDEAPGLIFWHPKGWALWQQVEQYMRAVYNDNGYQEVKAPQILDLSLWKKTGHWDNYRENMFTTESENRVYGLKPMNCPGHVQIFNAGLHSYRELPLRYGEFGQCHRNEPSGSLHGMMRVRGFTQDDGHIFCTEDQLQDECADFTALLQKVYRDFGFHEVLYKVATRPEKRIGSDDIWDKAETALMESLRRTGCEFEISPGEGAFYGPKIEYTLKDAIGRHWQCGTVQVDFSMPVRLGAEYVDAQDQRRAPVMLHRAILGSLERFIGMLIENHAGAMPPWLAPVQAVVCCISEPSADYAAQITQTLKKQGFRVQSDLRGEKITRKIREHSLQKVPYILVVGDKEKQNGTVAVRGLGGLDLGVIALEDFAARLAEDVAARRDVVQPESSAN.

Residues 1–66 (MVQITLPDGS…EHDAQLAIVT (66 aa)) form the TGS domain. The tract at residues 247-538 (DHRKIGRDLD…LIENHAGAMP (292 aa)) is catalytic. Zn(2+)-binding residues include C338, H389, and H515.

Belongs to the class-II aminoacyl-tRNA synthetase family. In terms of assembly, homodimer. Requires Zn(2+) as cofactor.

The protein localises to the cytoplasm. It carries out the reaction tRNA(Thr) + L-threonine + ATP = L-threonyl-tRNA(Thr) + AMP + diphosphate + H(+). In terms of biological role, catalyzes the attachment of threonine to tRNA(Thr) in a two-step reaction: L-threonine is first activated by ATP to form Thr-AMP and then transferred to the acceptor end of tRNA(Thr). Also edits incorrectly charged L-seryl-tRNA(Thr). In Bordetella petrii (strain ATCC BAA-461 / DSM 12804 / CCUG 43448), this protein is Threonine--tRNA ligase.